The following is a 206-amino-acid chain: Thymidylate kinase (206 aa).

An ATP-binding site is contributed by Gly-10–Ser-17.

Belongs to the thymidylate kinase family.

It catalyses the reaction dTMP + ATP = dTDP + ADP. Phosphorylation of dTMP to form dTDP in both de novo and salvage pathways of dTTP synthesis. The chain is Thymidylate kinase (tmk) from Neisseria meningitidis serogroup A / serotype 4A (strain DSM 15465 / Z2491).